The sequence spans 80 residues: Exodeoxyribonuclease 7 small subunit (80 aa).

Belongs to the XseB family. In terms of assembly, heterooligomer composed of large and small subunits.

It is found in the cytoplasm. It catalyses the reaction Exonucleolytic cleavage in either 5'- to 3'- or 3'- to 5'-direction to yield nucleoside 5'-phosphates.. In terms of biological role, bidirectionally degrades single-stranded DNA into large acid-insoluble oligonucleotides, which are then degraded further into small acid-soluble oligonucleotides. This is Exodeoxyribonuclease 7 small subunit from Rickettsia africae (strain ESF-5).